The primary structure comprises 429 residues: Alanine aminotransferase (429 aa).

Residues Gly-65 and Asn-204 each coordinate L-alanine. Lys-265 carries the post-translational modification N6-(pyridoxal phosphate)lysine. Residue Arg-403 participates in L-alanine binding.

The protein belongs to the class-I pyridoxal-phosphate-dependent aminotransferase family. As to quaternary structure, homodimer. The cofactor is pyridoxal 5'-phosphate.

Its subcellular location is the cytoplasm. It carries out the reaction L-alanine + 2-oxoglutarate = pyruvate + L-glutamate. The polypeptide is Alanine aminotransferase (aspC) (Mycobacterium bovis (strain ATCC BAA-935 / AF2122/97)).